A 456-amino-acid polypeptide reads, in one-letter code: Argininosuccinate lyase (456 aa).

The protein belongs to the lyase 1 family. Argininosuccinate lyase subfamily.

It is found in the cytoplasm. The catalysed reaction is 2-(N(omega)-L-arginino)succinate = fumarate + L-arginine. The protein operates within amino-acid biosynthesis; L-arginine biosynthesis; L-arginine from L-ornithine and carbamoyl phosphate: step 3/3. The protein is Argininosuccinate lyase of Listeria innocua serovar 6a (strain ATCC BAA-680 / CLIP 11262).